The chain runs to 784 residues: LPS-assembly protein LptD (784 aa).

The N-terminal stretch at 1 to 24 is a signal peptide; the sequence is MKKRIPTLLATMIATALYSQQGLA. Disulfide bonds link Cys31-Cys724 and Cys173-Cys725.

The protein belongs to the LptD family. In terms of assembly, component of the lipopolysaccharide transport and assembly complex. Interacts with LptE and LptA. May interact with LptE during assembly of LptD by the beta-barrel assembly machine (BAM). Also interacts with LptM, which promotes the efficient assembly of the LptDE translocon by the BAM complex. In terms of processing, contains two intramolecular disulfide bonds. At least one disulfide bond is required for activity, and protein is probably fully oxidized in vivo.

Its subcellular location is the cell outer membrane. Functionally, together with LptE, is involved in the assembly of lipopolysaccharide (LPS) at the surface of the outer membrane. Contributes to n-hexane resistance. This Escherichia coli (strain K12) protein is LPS-assembly protein LptD.